The following is a 550-amino-acid chain: Gamma-aminobutyric acid receptor subunit beta (550 aa).

The first 24 residues, 1-24, serve as a signal peptide directing secretion; sequence MRRSKTRRIFHVSITLLLVSTIFC. The Extracellular portion of the chain corresponds to 25 to 264; it reads QNGTKPHNNS…FQLRRSVGYF (240 aa). N26, N32, N33, N45, N53, and N193 each carry an N-linked (GlcNAc...) asparagine glycan. C180 and C194 are joined by a disulfide. Transmembrane regions (helical) follow at residues 265 to 285, 292 to 311, and 324 to 344; these read IFQT…SFWI, ARVA…STGV, and IDIY…EYAA. The Cytoplasmic portion of the chain corresponds to 345 to 527; the sequence is VNYSYWGRER…DVNLIDKYSR (183 aa). The segment at 405-465 is disordered; the sequence is AMSTSNTAAQ…TTSLKGARPH (61 aa). Over residues 406 to 421 the composition is skewed to polar residues; sequence MSTSNTAAQNNNFEST. Residues 528–548 traverse the membrane as a helical segment; sequence VVFPVCFIVFNLFYWSYYMMV.

This sequence belongs to the ligand-gated ion channel (TC 1.A.9) family. Gamma-aminobutyric acid receptor (TC 1.A.9.5) subfamily.

The protein resides in the postsynaptic cell membrane. It is found in the cell membrane. In terms of biological role, GABA, an inhibitory neurotransmitter, mediates neuronal inhibition by binding to the GABA receptor and opening an integral chloride channel. This Caenorhabditis elegans protein is Gamma-aminobutyric acid receptor subunit beta (gab-1).